The sequence spans 132 residues: Small ribosomal subunit protein uS8 (132 aa).

This sequence belongs to the universal ribosomal protein uS8 family. In terms of assembly, part of the 30S ribosomal subunit. Contacts proteins S5 and S12.

Functionally, one of the primary rRNA binding proteins, it binds directly to 16S rRNA central domain where it helps coordinate assembly of the platform of the 30S subunit. This chain is Small ribosomal subunit protein uS8, found in Bradyrhizobium sp. (strain BTAi1 / ATCC BAA-1182).